Here is a 261-residue protein sequence, read N- to C-terminus: Indole-3-glycerol phosphate synthase (261 aa).

It belongs to the TrpC family.

It carries out the reaction 1-(2-carboxyphenylamino)-1-deoxy-D-ribulose 5-phosphate + H(+) = (1S,2R)-1-C-(indol-3-yl)glycerol 3-phosphate + CO2 + H2O. The protein operates within amino-acid biosynthesis; L-tryptophan biosynthesis; L-tryptophan from chorismate: step 4/5. The chain is Indole-3-glycerol phosphate synthase from Burkholderia pseudomallei (strain 1106a).